The primary structure comprises 402 residues: MLHNPTGKERLALAFLLGMLAILGPLNIDMYLPSFPEIAKDLSASASLVQLSLTACLVGLTIGQLIVGPVSDAQGRRKPLLICIFLFALSSLFCALSPNITTLVAARFLQGFTASAGLVLSRAIVRDVFTGRELSKFFSLLMVITAVAPMVAPMTGGAILLLPFATWHTIFHVLMIIGFLLVLLIALRLKETLPLEKRIPSSIGTSVKTMGSLLKDRSFMGYALTVGFIHGGSFAYVSGTPFVYQDIYGVSPQVFSILFGINGLAIISGSFIIGRFGGIIHEKSLLRIAVITAMIATAVLLTMTMIHGPLATLVISIFIYMITIGMVLTSTFTLAMEKQGHRAGSASALLGMLPLLLGSIVSPLVGINETTAVPMGAIMFVTAVIGSLAFFGLTKERVGQNS.

The next 12 membrane-spanning stretches (helical) occupy residues 11–31, 48–68, 80–100, 108–125, 140–160, 167–187, 219–239, 254–274, 286–306, 308–328, 347–367, and 373–393; these read LALA…IDMY, LVQL…LIVG, LLIC…SPNI, FLQG…RAIV, LLMV…GAIL, WHTI…LIAL, FMGY…YVSG, VFSI…FIIG, LRIA…MTMI, GPLA…GMVL, SALL…LVGI, and VPMG…FFGL.

It belongs to the major facilitator superfamily. Bcr/CmlA family.

The protein localises to the cell membrane. This is an uncharacterized protein from Bacillus subtilis (strain 168).